Reading from the N-terminus, the 356-residue chain is Tyrosine recombinase XerS (356 aa).

Residues 16-121 form the Core-binding (CB) domain; that stretch reads IMPWYVLDYY…ALSSLYKYLT (106 aa). A Tyr recombinase domain is found at 169 to 354; that stretch reads AFLDYVDKEY…VNDEQKNALD (186 aa). Catalysis depends on residues Arg-210, Lys-234, His-306, Arg-309, and His-332. The O-(3'-phospho-DNA)-tyrosine intermediate role is filled by Tyr-341.

Belongs to the 'phage' integrase family. XerS subfamily.

The protein resides in the cytoplasm. With respect to regulation, ftsK is required for recombination. In terms of biological role, site-specific tyrosine recombinase, which acts by catalyzing the cutting and rejoining of the recombining DNA molecules. Essential to convert dimers of the bacterial chromosome into monomers to permit their segregation at cell division. In Streptococcus pyogenes serotype M1, this protein is Tyrosine recombinase XerS.